The primary structure comprises 115 residues: Putative UPF0377 protein YHL045W (115 aa).

A helical transmembrane segment spans residues 10–30; that stretch reads ACIFIDSVCEGIVFWGLCLFV.

Belongs to the UPF0377 family.

The protein localises to the membrane. The polypeptide is Putative UPF0377 protein YHL045W (Saccharomyces cerevisiae (strain ATCC 204508 / S288c) (Baker's yeast)).